The primary structure comprises 292 residues: MKIRVGSRESKLAVRQAQIVIDSIKKYNPDIEIELVTMKTTGDKILDKTIDKIGGKGLFVKELDRALLDGKVDITVHSFKDMPMDIDDRLPIVAVSKREDPRDVLVLPKGKNEIDFNGPIGCSSSRRKIQIEKIYPGCTVEPIRGNVLTRLEKLDKGEYSAIALAYAGLKRLGLEERIWRVFSTDEIVPAACQGIIAVQARKDFDASILANFHDKDSWDVSVAERSFIKALNGGCSSPSAAYGVIQGEKIVLTGFYVDKNGKIYKMTKTGDRNQGEALGYSLAMEMLKGADA.

An S-(dipyrrolylmethanemethyl)cysteine modification is found at Cys-235.

It belongs to the HMBS family. In terms of assembly, monomer. Requires dipyrromethane as cofactor.

It carries out the reaction 4 porphobilinogen + H2O = hydroxymethylbilane + 4 NH4(+). It functions in the pathway porphyrin-containing compound metabolism; protoporphyrin-IX biosynthesis; coproporphyrinogen-III from 5-aminolevulinate: step 2/4. Functionally, tetrapolymerization of the monopyrrole PBG into the hydroxymethylbilane pre-uroporphyrinogen in several discrete steps. This chain is Porphobilinogen deaminase, found in Acetivibrio thermocellus (strain ATCC 27405 / DSM 1237 / JCM 9322 / NBRC 103400 / NCIMB 10682 / NRRL B-4536 / VPI 7372) (Clostridium thermocellum).